The primary structure comprises 243 residues: Type II restriction enzyme NlaIV (243 aa).

It catalyses the reaction Endonucleolytic cleavage of DNA to give specific double-stranded fragments with terminal 5'-phosphates.. In terms of biological role, a P subtype restriction enzyme that recognizes the double-stranded sequence 5'-GGNNCC-3' and cleaves after N-3. The polypeptide is Type II restriction enzyme NlaIV (nlaIVR) (Neisseria lactamica).